A 284-amino-acid chain; its full sequence is RNase adapter protein RapZ (284 aa).

8-15 (GRSGSGKS) is an ATP binding site. 56-59 (DVRN) provides a ligand contact to GTP. An RNA-binding region spans residues 266-284 (RSRGKNVQSRHRTLEKRKT).

Belongs to the RapZ-like family. RapZ subfamily. In terms of assembly, homotrimer.

Its function is as follows. Modulates the synthesis of GlmS, by affecting the processing and stability of the regulatory small RNA GlmZ. When glucosamine-6-phosphate (GlcN6P) concentrations are high in the cell, RapZ binds GlmZ and targets it to cleavage by RNase E. Consequently, GlmZ is inactivated and unable to activate GlmS synthesis. Under low GlcN6P concentrations, RapZ is sequestered and inactivated by an other regulatory small RNA, GlmY, preventing GlmZ degradation and leading to synthesis of GlmS. In Salmonella typhi, this protein is RNase adapter protein RapZ.